Consider the following 106-residue polypeptide: MNNERIYQVLKGLVFSEKAQVLGDTAGVQVFKVDINATKLEIKKAVEKLFGVEVVKVNTTITKGKTKRFGRTLGRRSDVKKAYVTLKAGQDVEMADLGDTAESAAE.

It belongs to the universal ribosomal protein uL23 family. In terms of assembly, part of the 50S ribosomal subunit. Contacts protein L29, and trigger factor when it is bound to the ribosome.

Functionally, one of the early assembly proteins it binds 23S rRNA. One of the proteins that surrounds the polypeptide exit tunnel on the outside of the ribosome. Forms the main docking site for trigger factor binding to the ribosome. This is Large ribosomal subunit protein uL23 from Acinetobacter baumannii (strain SDF).